An 804-amino-acid chain; its full sequence is G-type lectin S-receptor-like serine/threonine-protein kinase At1g61490 (804 aa).

A signal peptide spans 1-24; sequence MGKKRIVFFACLLLFTVLLRFSYA. One can recognise a Bulb-type lectin domain in the interval 25–144; it reads GITTESPLSV…ASGRTLWESF (120 aa). Topologically, residues 25–425 are extracellular; the sequence is GITTESPLSV…SELGGNKRNK (401 aa). 6 N-linked (GlcNAc...) asparagine glycosylation sites follow: asparagine 53, asparagine 94, asparagine 117, asparagine 134, asparagine 236, and asparagine 267. The 37-residue stretch at 278–314 folds into the EGF-like domain; that stretch reads PANSCDIYGVCGPFGLCIVSVPLKCKCLKGFVPHSTE. Intrachain disulfides connect cysteine 282–cysteine 294 and cysteine 288–cysteine 302. 3 N-linked (GlcNAc...) asparagine glycosylation sites follow: asparagine 320, asparagine 336, and asparagine 375. Residues 333–415 enclose the PAN domain; the sequence is CQGNSTGKDV…GEILSIRLAH (83 aa). Disulfide bonds link cysteine 368/cysteine 389 and cysteine 372/cysteine 378. A helical transmembrane segment spans residues 426 to 446; the sequence is IIVASTVSLSLFVILTSAAFG. The Cytoplasmic portion of the chain corresponds to 447–804; it reads FWRYRVKHKA…EMTQSMILGR (358 aa). Residues 490–775 enclose the Protein kinase domain; it reads FSLSNKLGQG…DLPSPKQPTF (286 aa). ATP-binding positions include 496–504 and lysine 518; that span reads LGQGGFGSV. 2 positions are modified to phosphoserine: serine 524 and serine 539. A caM-binding region spans residues 579 to 596; it reads RKKLEVDWPKRFDIVQGI. Aspartate 615 serves as the catalytic Proton acceptor. 2 positions are modified to phosphoserine: serine 619 and serine 632. Threonine 649 carries the post-translational modification Phosphothreonine. Serine 692 carries the post-translational modification Phosphoserine.

Belongs to the protein kinase superfamily. Ser/Thr protein kinase family.

It localises to the cell membrane. The enzyme catalyses L-seryl-[protein] + ATP = O-phospho-L-seryl-[protein] + ADP + H(+). It catalyses the reaction L-threonyl-[protein] + ATP = O-phospho-L-threonyl-[protein] + ADP + H(+). This is G-type lectin S-receptor-like serine/threonine-protein kinase At1g61490 from Arabidopsis thaliana (Mouse-ear cress).